The sequence spans 436 residues: Glutamyl-tRNA reductase (436 aa).

Substrate is bound by residues 52–55 (TCHR), serine 105, 110–112 (EDQ), and glutamine 116. Residue cysteine 53 is the Nucleophile of the active site. An NADP(+)-binding site is contributed by 184–189 (GAGEMG).

Belongs to the glutamyl-tRNA reductase family. As to quaternary structure, homodimer.

It catalyses the reaction (S)-4-amino-5-oxopentanoate + tRNA(Glu) + NADP(+) = L-glutamyl-tRNA(Glu) + NADPH + H(+). The protein operates within porphyrin-containing compound metabolism; protoporphyrin-IX biosynthesis; 5-aminolevulinate from L-glutamyl-tRNA(Glu): step 1/2. Its function is as follows. Catalyzes the NADPH-dependent reduction of glutamyl-tRNA(Glu) to glutamate 1-semialdehyde (GSA). The chain is Glutamyl-tRNA reductase from Halobacterium salinarum (strain ATCC 29341 / DSM 671 / R1).